A 65-amino-acid chain; its full sequence is Large ribosomal subunit protein bL35 (65 aa).

It belongs to the bacterial ribosomal protein bL35 family.

This chain is Large ribosomal subunit protein bL35, found in Burkholderia ambifaria (strain MC40-6).